Here is a 179-residue protein sequence, read N- to C-terminus: MGKIKVGVVTARWNQEITSKLEEGAISYLEACEDVEIFAALVPGAVEIPLACQAFLEAGCDGVVALGVVIRGDTSHYDYVCNSVTDGVTRLMLDYKKPIGFGVLTTENEEQALARAGGDHGNKGEEAAQVTMEMIGLTQEIPAAMKTALMLAKKAPAKAAKKPAKAAAKTQKKKKKVRK.

5-amino-6-(D-ribitylamino)uracil-binding positions include W13, 45 to 47, and 68 to 70; these read AVE and VVI. Residue 73–74 participates in (2S)-2-hydroxy-3-oxobutyl phosphate binding; it reads DT. The active-site Proton donor is H76. F101 is a binding site for 5-amino-6-(D-ribitylamino)uracil. R115 is a binding site for (2S)-2-hydroxy-3-oxobutyl phosphate. Residues 157–179 are disordered; that stretch reads AKAAKKPAKAAAKTQKKKKKVRK.

It belongs to the DMRL synthase family.

The catalysed reaction is (2S)-2-hydroxy-3-oxobutyl phosphate + 5-amino-6-(D-ribitylamino)uracil = 6,7-dimethyl-8-(1-D-ribityl)lumazine + phosphate + 2 H2O + H(+). The protein operates within cofactor biosynthesis; riboflavin biosynthesis; riboflavin from 2-hydroxy-3-oxobutyl phosphate and 5-amino-6-(D-ribitylamino)uracil: step 1/2. Catalyzes the formation of 6,7-dimethyl-8-ribityllumazine by condensation of 5-amino-6-(D-ribitylamino)uracil with 3,4-dihydroxy-2-butanone 4-phosphate. This is the penultimate step in the biosynthesis of riboflavin. The chain is 6,7-dimethyl-8-ribityllumazine synthase from Bdellovibrio bacteriovorus (strain ATCC 15356 / DSM 50701 / NCIMB 9529 / HD100).